The following is a 361-amino-acid chain: Velvet complex subunit B (361 aa).

Residues 1–336 (MIVRTEDQKL…GNQGQKLPLR (336 aa)) form the Velvet domain. Disordered stretches follow at residues 42–222 (PSST…NNIP) and 327–361 (GNQG…EDDS). Low complexity-rich tracts occupy residues 57-74 (PSAS…SRPP) and 93-107 (PPSS…SQSQ). Positions 108–127 (DNLTPSSPYPPHSNSEQPQT) are enriched in polar residues. Residues 130–147 (YPPPPPIDRAAPFPPPVL) show a composition bias toward pro residues. Polar residues-rich tracts occupy residues 149–168 (SIQS…NNDD), 181–196 (GYTN…YGSG), and 212–222 (SGNATPQNNIP). Residues 335-349 (LRNRHGTGSKRRRRN) are compositionally biased toward basic residues.

This sequence belongs to the velvet family. VelB subfamily. As to quaternary structure, component of the heterotrimeric velvet complex composed of laeA, veA and velB; VeA acting as a bridging protein between laeA and velB. Forms a heterodimeric complex with vosA; the formation of the velB-vosA complex is light-dependent.

It is found in the nucleus. The protein localises to the cytoplasm. Component of the velvet transcription factor complex that controls sexual/asexual developmental ratio in response to light, promoting sexual development in the darkness while stimulating asexual sporulation under illumination. The velvet complex acts as a global regulator for secondary metabolite gene expression. Component of the velB-VosA heterodimeric complex that plays a dual role in activating genes associated with spore maturation and repressing certain development-associated genes. The velB-VosA complex binds DNA through the DNA-binding domain of vosA that recognizes an 11-nucleotide consensus sequence 5'-CTGGCCGCGGC-3' consisting of two motifs in the promoters of key developmental regulatory genes. The protein is Velvet complex subunit B of Coprinopsis cinerea (strain Okayama-7 / 130 / ATCC MYA-4618 / FGSC 9003) (Inky cap fungus).